The primary structure comprises 352 residues: Protein Wnt-3a (352 aa).

The first 18 residues, 1 to 18 (MAPLGYFLLLCSLKQALG), serve as a signal peptide directing secretion. Disulfide bonds link Cys-77–Cys-88, Cys-128–Cys-136, Cys-138–Cys-155, Cys-203–Cys-217, Cys-205–Cys-212, Cys-281–Cys-312, Cys-297–Cys-307, Cys-311–Cys-351, Cys-327–Cys-342, Cys-329–Cys-339, and Cys-334–Cys-335. An N-linked (GlcNAc...) asparagine glycan is attached at Asn-87. Ser-209 carries the O-palmitoleoyl serine; by PORCN lipid modification. N-linked (GlcNAc...) asparagine glycosylation is present at Asn-298.

The protein belongs to the Wnt family. As to quaternary structure, forms a soluble 1:1 complex with AFM; this prevents oligomerization and is required for prolonged biological activity. The complex with AFM may represent the physiological form in body fluids. Homooligomer; disulfide-linked, leading to inactivation. Interacts with PORCN. Interacts with APCDD1 and WLS. Component of the Wnt-Fzd-LRP5-LRP6 signaling complex that contains a WNT protein, a FZD protein and LRP5 or LRP6. Interacts directly in the complex with LRP6. Interacts with glypican GPC3. Interacts with PKD1 (via extracellular domain). Interacts with FZD5. Post-translationally, palmitoleoylation by PORCN is required for efficient binding to frizzled receptors. Palmitoleoylation is required for proper trafficking to cell surface, vacuolar acidification is critical to release palmitoleoylated WNT3A from WLS in secretory vesicles. Depalmitoleoylated by NOTUM, leading to inhibit Wnt signaling pathway, possibly by promoting disulfide bond formation and oligomerization. Proteolytic processing by TIKI1 and TIKI2 promotes oxidation and formation of large disulfide-bond oligomers, leading to inactivation of WNT3A. In terms of processing, disulfide bonds have critical and distinct roles in secretion and activity. Loss of each conserved cysteine in WNT3A results in high molecular weight oxidized Wnt oligomers, which are formed through inter-Wnt disulfide bonding. In terms of tissue distribution, moderately expressed in placenta and at low levels in adult lung, spleen, and prostate.

It is found in the secreted. The protein localises to the extracellular space. Its subcellular location is the extracellular matrix. Ligand for members of the frizzled family of seven transmembrane receptors. Functions in the canonical Wnt signaling pathway that results in activation of transcription factors of the TCF/LEF family. Required for normal embryonic mesoderm development and formation of caudal somites. Required for normal morphogenesis of the developing neural tube. Mediates self-renewal of the stem cells at the bottom on intestinal crypts (in vitro). This chain is Protein Wnt-3a (WNT3A), found in Homo sapiens (Human).